The chain runs to 534 residues: uncharacterized protein (534 aa).

Transmembrane regions (helical) follow at residues 4–22 (ILVL…RVSF), 24–46 (GISL…GWTI), 56–75 (ALFV…RGLA), 82–104 (AITG…RLLG), and 134–156 (PAAV…VLFV). The tract at residues 167–187 (GDSDGTDSASETSGQSSAEIA) is disordered. Over residues 172–187 (TDSASETSGQSSAEIA) the composition is skewed to polar residues. 2 consecutive RCK C-terminal domains span residues 180–264 (GQSS…TLGE) and 265–349 (LQDT…AVGH). Transmembrane regions (helical) follow at residues 359–378 (LLSL…LSLQ), 382–401 (FSMS…ILGH), 408–430 (IRGS…LFLA), 445–467 (MERG…LVGF), 479–501 (WQSL…LTGA), and 511–533 (YVAA…VELI).

Belongs to the AAE transporter (TC 2.A.81) family.

Its subcellular location is the cell membrane. This is an uncharacterized protein from Rhodopirellula baltica (strain DSM 10527 / NCIMB 13988 / SH1).